The chain runs to 141 residues: Transcription antitermination protein NusB (141 aa).

Belongs to the NusB family.

In terms of biological role, involved in transcription antitermination. Required for transcription of ribosomal RNA (rRNA) genes. Binds specifically to the boxA antiterminator sequence of the ribosomal RNA (rrn) operons. The polypeptide is Transcription antitermination protein NusB (Desulfotalea psychrophila (strain LSv54 / DSM 12343)).